Consider the following 300-residue polypeptide: Recombination-associated protein RdgC (300 aa).

This sequence belongs to the RdgC family.

The protein resides in the cytoplasm. The protein localises to the nucleoid. Functionally, may be involved in recombination. This chain is Recombination-associated protein RdgC, found in Herminiimonas arsenicoxydans.